We begin with the raw amino-acid sequence, 968 residues long: RNA polymerase-associated protein RapA (968 aa).

One can recognise a Helicase ATP-binding domain in the interval 163-332 (EVGRRYAPRV…FARLRLLDPD (170 aa)). 176–183 (DEVGLGKT) provides a ligand contact to ATP. The short motif at 278–281 (DEAH) is the DEAH box element. The region spanning 491-643 (RVDWLIAFLK…ELTCPSGHVL (153 aa)) is the Helicase C-terminal domain.

This sequence belongs to the SNF2/RAD54 helicase family. RapA subfamily. As to quaternary structure, interacts with the RNAP. Has a higher affinity for the core RNAP than for the holoenzyme. Its ATPase activity is stimulated by binding to RNAP.

Transcription regulator that activates transcription by stimulating RNA polymerase (RNAP) recycling in case of stress conditions such as supercoiled DNA or high salt concentrations. Probably acts by releasing the RNAP, when it is trapped or immobilized on tightly supercoiled DNA. Does not activate transcription on linear DNA. Probably not involved in DNA repair. The sequence is that of RNA polymerase-associated protein RapA from Shewanella putrefaciens (strain CN-32 / ATCC BAA-453).